Here is a 358-residue protein sequence, read N- to C-terminus: 3-isopropylmalate dehydrogenase (358 aa).

77–90 is a binding site for NAD(+); sequence GPKWDNLPIDQRPE. Substrate contacts are provided by Arg98, Arg108, Arg137, and Asp221. Positions 221, 245, and 249 each coordinate Mg(2+). 279-291 lines the NAD(+) pocket; it reads GSAPDIAHLNIAN.

Belongs to the isocitrate and isopropylmalate dehydrogenases family. LeuB type 1 subfamily. As to quaternary structure, homodimer. Mg(2+) is required as a cofactor. Mn(2+) serves as cofactor.

Its subcellular location is the cytoplasm. The enzyme catalyses (2R,3S)-3-isopropylmalate + NAD(+) = 4-methyl-2-oxopentanoate + CO2 + NADH. Its pathway is amino-acid biosynthesis; L-leucine biosynthesis; L-leucine from 3-methyl-2-oxobutanoate: step 3/4. In terms of biological role, catalyzes the oxidation of 3-carboxy-2-hydroxy-4-methylpentanoate (3-isopropylmalate) to 3-carboxy-4-methyl-2-oxopentanoate. The product decarboxylates to 4-methyl-2 oxopentanoate. This Campylobacter jejuni (strain RM1221) protein is 3-isopropylmalate dehydrogenase.